Consider the following 236-residue polypeptide: MGQKIHPFGFRLSVQKNWSSRWYANSNNFPAMLSSDIKVREFLKKKLAHAAVSKIVIERPAKNAKITIYSARPGIVIGKKGEDIESLRSGLQGLMGVPVHLNIEEVRKPEIDATLIAESIAQQLEKRVMFRRAMKRAMQNAMRLGAQGIKIMSSGRLNGIEIARTEWYREGRVPLHTLRADIDYGVAEAKTTYGIIGIKVWVFKGEVFGNKIEQAAQPAEPEKKVRKSGAKNAATS.

The KH type-2 domain occupies 39-107; it reads VREFLKKKLA…PVHLNIEEVR (69 aa). A disordered region spans residues 215-236; that stretch reads AAQPAEPEKKVRKSGAKNAATS.

It belongs to the universal ribosomal protein uS3 family. Part of the 30S ribosomal subunit. Forms a tight complex with proteins S10 and S14.

Functionally, binds the lower part of the 30S subunit head. Binds mRNA in the 70S ribosome, positioning it for translation. This chain is Small ribosomal subunit protein uS3, found in Methylobacillus flagellatus (strain ATCC 51484 / DSM 6875 / VKM B-1610 / KT).